The following is a 463-amino-acid chain: Argininosuccinate lyase (463 aa).

This sequence belongs to the lyase 1 family. Argininosuccinate lyase subfamily.

The protein localises to the cytoplasm. The enzyme catalyses 2-(N(omega)-L-arginino)succinate = fumarate + L-arginine. Its pathway is amino-acid biosynthesis; L-arginine biosynthesis; L-arginine from L-ornithine and carbamoyl phosphate: step 3/3. This is Argininosuccinate lyase from Staphylococcus epidermidis (strain ATCC 35984 / DSM 28319 / BCRC 17069 / CCUG 31568 / BM 3577 / RP62A).